Reading from the N-terminus, the 216-residue chain is 3-isopropylmalate dehydratase small subunit (216 aa).

This sequence belongs to the LeuD family. LeuD type 1 subfamily. As to quaternary structure, heterodimer of LeuC and LeuD.

It carries out the reaction (2R,3S)-3-isopropylmalate = (2S)-2-isopropylmalate. It functions in the pathway amino-acid biosynthesis; L-leucine biosynthesis; L-leucine from 3-methyl-2-oxobutanoate: step 2/4. Functionally, catalyzes the isomerization between 2-isopropylmalate and 3-isopropylmalate, via the formation of 2-isopropylmaleate. The protein is 3-isopropylmalate dehydratase small subunit of Psychrobacter sp. (strain PRwf-1).